Reading from the N-terminus, the 174-residue chain is 3-hydroxydecanoyl-[acyl-carrier-protein] dehydratase (174 aa).

Residue His73 is part of the active site.

The protein belongs to the thioester dehydratase family. FabA subfamily. Homodimer.

The protein resides in the cytoplasm. It carries out the reaction a (3R)-hydroxyacyl-[ACP] = a (2E)-enoyl-[ACP] + H2O. The catalysed reaction is (3R)-hydroxydecanoyl-[ACP] = (2E)-decenoyl-[ACP] + H2O. It catalyses the reaction (2E)-decenoyl-[ACP] = (3Z)-decenoyl-[ACP]. It functions in the pathway lipid metabolism; fatty acid biosynthesis. Necessary for the introduction of cis unsaturation into fatty acids. Catalyzes the dehydration of (3R)-3-hydroxydecanoyl-ACP to E-(2)-decenoyl-ACP and then its isomerization to Z-(3)-decenoyl-ACP. Can catalyze the dehydratase reaction for beta-hydroxyacyl-ACPs with saturated chain lengths up to 16:0, being most active on intermediate chain length. The protein is 3-hydroxydecanoyl-[acyl-carrier-protein] dehydratase of Teredinibacter turnerae (strain ATCC 39867 / T7901).